Reading from the N-terminus, the 419-residue chain is MVAAAATSAFFPVPAPGTSPKPGKSGNWPSSLSPTFKPKSIPNGGFQVKANASAHPKANGSAVNLKSGSLNTQEDTSSSPPPRAFLNQLPDWSMLLTAITTVFVAAEKQWTMLDRKSKRPDMLVDSVGLKSIVRDGLVSRHSFSIRSYEIGADRTASIETLMNHLQETTINHCKSLGLHNDGFGRTPGMCKNDLIWVLTKMQIMVNRYPTWGDTVEINTWFSQSGKIGMASDWLISDCNTGEILIRATSVWAMMNQKTRRFSRLPYEVRQELTPHFVDSPHVIEDNDQKLRKFDVKTGDSIRKGLTPRWNDLDVNQHVSNVKYIGWILESMPIEVLETQELCSLTVEYRRECGMDSVLESVTAVDPSENGGRSQYKHLLRLEDGTDIVKSRTEWRPKNAGTNGAISTSTAKTSNGNSVS.

The transit peptide at 1 to 50 (MVAAAATSAFFPVPAPGTSPKPGKSGNWPSSLSPTFKPKSIPNGGFQVKA) directs the protein to the chloroplast. Positions 1 to 84 (MVAAAATSAF…DTSSSPPPRA (84 aa)) are disordered. Over residues 61 to 78 (SAVNLKSGSLNTQEDTSS) the composition is skewed to polar residues. Residues Asn315, His317, and Cys352 contribute to the active site. A disordered region spans residues 390-419 (SRTEWRPKNAGTNGAISTSTAKTSNGNSVS). The segment covering 399 to 419 (AGTNGAISTSTAKTSNGNSVS) has biased composition (polar residues).

This sequence belongs to the acyl-ACP thioesterase family.

It is found in the plastid. The protein localises to the chloroplast. It catalyses the reaction octanoyl-[ACP] + H2O = octanoate + holo-[ACP] + H(+). It carries out the reaction decanoyl-[ACP] + H2O = decanoate + holo-[ACP] + H(+). Plays an essential role in chain termination during de novo fatty acid synthesis. Possesses thioesterase activity for short chain acyl-ACPs. Substrate preference is 8:0 &gt; 10:0. This chain is Acyl-[acyl-carrier-protein] hydrolase FATB1, chloroplastic, found in Cuphea viscosissima (Blue waxweed).